The primary structure comprises 463 residues: Phosphomannomutase/phosphoglucomutase (463 aa).

Y17 is an alpha-D-glucose 1-phosphate binding site. Residue Y17 coordinates alpha-D-mannose 1-phosphate. Residue S108 is the Non-phosphorylated intermediate of the active site. S108, D242, D244, and D246 together coordinate Mg(2+). Phosphoserine is present on S108. Residues K285, H308, E325–H329, and R421–T425 each bind alpha-D-glucose 1-phosphate. Alpha-D-mannose 1-phosphate-binding positions include H308, E325–H329, and R421–T425.

Belongs to the phosphohexose mutase family. In terms of assembly, monomer. The cofactor is Mg(2+).

It catalyses the reaction alpha-D-mannose 1-phosphate = D-mannose 6-phosphate. The catalysed reaction is alpha-D-glucose 1-phosphate = alpha-D-glucose 6-phosphate. The protein operates within nucleotide-sugar biosynthesis; GDP-alpha-D-mannose biosynthesis; alpha-D-mannose 1-phosphate from D-fructose 6-phosphate: step 2/2. It participates in bacterial outer membrane biogenesis; lipopolysaccharide biosynthesis. In terms of biological role, highly reversible phosphoryltransferase. The phosphomannomutase activity produces a precursor for alginate polymerization, the alginate layer causes a mucoid phenotype and provides a protective barrier against host immune defenses and antibiotics. Also involved in core lipopolysaccaride (LPS) biosynthesis due to its phosphoglucomutase activity. Essential for rhamnolipid production, an exoproduct correlated with pathogenicity. Required for biofilm production. The reaction proceeds via 2 processive phosphoryl transferase reactions; first from enzyme-phospho-Ser-108 to the substrate (generating a bisphosphorylated substrate intermediate and a dephosphorylated enzyme), a 180 degree rotation of the intermediate (probably aided by movement of domain 4), and subsequent transfer of phosphate back to the enzyme. This Pseudomonas aeruginosa (strain UCBPP-PA14) protein is Phosphomannomutase/phosphoglucomutase (algC).